The following is a 497-amino-acid chain: Cytochrome P450 71A18 (497 aa).

Residues 4–24 (TLMVSLCLTTLLTLLLLKKFL) traverse the membrane as a helical segment. Cys-439 is a binding site for heme.

The protein belongs to the cytochrome P450 family. Requires heme as cofactor.

It is found in the membrane. The polypeptide is Cytochrome P450 71A18 (CYP71A18) (Arabidopsis thaliana (Mouse-ear cress)).